Consider the following 328-residue polypeptide: Cytosolic Fe-S cluster assembly factor NBP35 (328 aa).

4 residues coordinate [4Fe-4S] cluster: Cys27, Cys41, Cys44, and Cys50. Position 80 to 87 (80 to 87 (GKGGVGKS)) interacts with ATP. The [4Fe-4S] cluster site is built by Cys253 and Cys256.

This sequence belongs to the Mrp/NBP35 ATP-binding proteins family. NUBP1/NBP35 subfamily. In terms of assembly, heterotetramer of 2 NBP35 and 2 CFD1 chains. [4Fe-4S] cluster is required as a cofactor.

Its subcellular location is the cytoplasm. The protein localises to the nucleus. Component of the cytosolic iron-sulfur (Fe/S) protein assembly (CIA) machinery. Required for maturation of extramitochondrial Fe-S proteins. The NBP35-CFD1 heterotetramer forms a Fe-S scaffold complex, mediating the de novo assembly of an Fe-S cluster and its transfer to target apoproteins. Required for biogenesis and export of both ribosomal subunits, which may reflect a role in assembly of the Fe/S clusters in RLI1, a protein which performs rRNA processing and ribosome export. This chain is Cytosolic Fe-S cluster assembly factor NBP35, found in Saccharomyces cerevisiae (strain ATCC 204508 / S288c) (Baker's yeast).